The following is a 504-amino-acid chain: Probable cytosol aminopeptidase (504 aa).

Residues lysine 268 and aspartate 273 each coordinate Mn(2+). The active site involves lysine 280. Residues aspartate 291, aspartate 350, and glutamate 352 each contribute to the Mn(2+) site. Arginine 354 is a catalytic residue.

It belongs to the peptidase M17 family. Mn(2+) serves as cofactor.

It is found in the cytoplasm. It carries out the reaction Release of an N-terminal amino acid, Xaa-|-Yaa-, in which Xaa is preferably Leu, but may be other amino acids including Pro although not Arg or Lys, and Yaa may be Pro. Amino acid amides and methyl esters are also readily hydrolyzed, but rates on arylamides are exceedingly low.. The enzyme catalyses Release of an N-terminal amino acid, preferentially leucine, but not glutamic or aspartic acids.. Functionally, presumably involved in the processing and regular turnover of intracellular proteins. Catalyzes the removal of unsubstituted N-terminal amino acids from various peptides. This is Probable cytosol aminopeptidase from Psychromonas ingrahamii (strain DSM 17664 / CCUG 51855 / 37).